The chain runs to 147 residues: MERVNNYKLCVALLIMSVMMAMAAAQSATNVRSTYHLYNPQNINWDLRAASAFCATWDADKPLAWRQKYGWTAFCGPAGPRGQDSCGRCLRVTNTGTGTQATVRIVDQCSNGGLDLDVNVFNQLDTNGLGYQQGHLIVNYEFVNCND.

The signal sequence occupies residues 1–25 (MERVNNYKLCVALLIMSVMMAMAAA). Positions 26–147 (QSATNVRSTY…VNYEFVNCND (122 aa)) constitute a Barwin domain. Disulfide bonds link C54–C86, C75–C109, and C89–C145.

It localises to the secreted. Its subcellular location is the cell wall. This Nicotiana tabacum (Common tobacco) protein is Pathogenesis-related protein PR-4B.